The following is a 508-amino-acid chain: MALLSVIRRWHFREHLSIREICRRTGLSRNTIRKYLRAGGAEPKFNVPERPSKLDPFADRLSAWLKTESKKSRKQKRTMKQLHSDLVSLGYEGSYNRVAAFAREWRDDRQRELQTTGRGTFVPLAFEPGEAFQFDWSEDWAIIGNERTKLQVAHTKLSYSRAFIVRAYLLQTHEMLFDAHNHAFRVFGGIPGRGIYDNMRTAIDKVGRGKERDVNVRFMAMASHYVFEPEFCNPASGWEKGQVEKNVQDARHRFFQPVPRFPSLEALNDWLEQRCKEFWAKTPHGQMRGTIADIWVEEVPALMPASRPFDGFVEYTKRVTPTCLVHLERNRYSVPASLANRPVSLRVYPDRVVVAAEGQIVCEHRRVIDRSHDRPGQTIYDWRHYLAVVQRKPGALRNGAPFVELPDVFRTLQQYLLKKPGGDREMVDILALVLQHDEQAVLSAVDMALRSGVPTKTHVLNLLHRLVDGKSLTPPTLDAPQALTLTNEPKANVERYDTLRKTEVRHAS.

The HTH IS21-type domain occupies 3 to 65 (LLSVIRRWHF…PFADRLSAWL (63 aa)). In terms of domain architecture, Integrase catalytic spans 124–299 (LAFEPGEAFQ…TIADIWVEEV (176 aa)).

It belongs to the transposase IS21/IS408/IS1162 family.

Required for the transposition of the insertion element. The polypeptide is Transposase (nmoT) (Aminobacter aminovorans (Chelatobacter heintzii)).